The chain runs to 604 residues: Prostaglandin G/H synthase 2 (604 aa).

Residues 1–17 form the signal peptide; sequence MLARALLLCVALALGHA. Positions 18-55 constitute an EGF-like domain; the sequence is ANPCCSNPCQNRGVCMSVGFDQYQCDCTRTGFYGENCS. Cystine bridges form between Cys-21-Cys-32, Cys-22-Cys-145, Cys-26-Cys-42, and Cys-44-Cys-54. Asn-53 carries N-linked (GlcNAc...) asparagine glycosylation. A substrate-binding site is contributed by Arg-106. N-linked (GlcNAc...) asparagine glycosylation occurs at Asn-130. His-193 (proton acceptor) is an active-site residue. Tyr-341 contributes to the substrate binding site. The active-site For cyclooxygenase activity is the Tyr-371. His-374 is a binding site for heme b. Asn-396 is a glycosylation site (N-linked (GlcNAc...) asparagine). Residue Cys-526 is modified to S-nitrosocysteine. A disulfide bridge links Cys-555 with Cys-561. Asn-580 carries N-linked (GlcNAc...) asparagine glycosylation.

This sequence belongs to the prostaglandin G/H synthase family. Homodimer. The cofactor is heme b. Post-translationally, S-nitrosylation by NOS2 (iNOS) activates enzyme activity. S-nitrosylation may take place on different Cys residues in addition to Cys-526.

It localises to the microsome membrane. The protein localises to the endoplasmic reticulum membrane. It is found in the nucleus inner membrane. The protein resides in the nucleus outer membrane. It catalyses the reaction (5Z,8Z,11Z,14Z)-eicosatetraenoate + AH2 + 2 O2 = prostaglandin H2 + A + H2O. It carries out the reaction (5Z,8Z,11Z,14Z)-eicosatetraenoate + 2 O2 = prostaglandin G2. The enzyme catalyses prostaglandin G2 + AH2 = prostaglandin H2 + A + H2O. The catalysed reaction is (5Z,8Z,11Z,14Z,17Z)-eicosapentaenoate + 2 O2 = prostaglandin G3. It catalyses the reaction prostaglandin G3 + AH2 = prostaglandin H3 + A + H2O. It carries out the reaction (8Z,11Z,14Z)-eicosatrienoate + 2 O2 = prostaglandin G1. The enzyme catalyses prostaglandin G1 + AH2 = prostaglandin H1 + A + H2O. The catalysed reaction is 2-(5Z,8Z,11Z,14Z)-eicosatetraenoyl-sn-glycero-3-phosphoethanolamine + 2 O2 = 2-(prostaglandin G2)-sn-glycero-3-phosphoethanolamine. It catalyses the reaction 2-(prostaglandin G2)-sn-glycero-3-phosphoethanolamine + AH2 = 2-(prostaglandin H2)-sn-glycero-3-phosphoethanolamine + A + H2O. It carries out the reaction 2-(5Z,8Z,11Z,14Z)-eicosatetraenoyl-sn-glycero-3-phosphocholine + 2 O2 = 2-(prostaglandin G2)-sn-glycero-3-phosphocholine. The enzyme catalyses 2-(prostaglandin G2)-sn-glycero-3-phosphocholine + AH2 = 2-(prostaglandin H2)-sn-glycero-3-phosphocholine + A + H2O. The catalysed reaction is (15S)-hydroperoxy-(5Z,8Z,11Z,13E)-eicosatetraenoate + AH2 = (15S)-hydroxy-(5Z,8Z,11Z,13E)-eicosatetraenoate + A + H2O. It catalyses the reaction 2-(5Z,8Z,11Z,14Z)-eicosatetraenoyl-sn-glycero-3-phosphocholine + AH2 + O2 = 2-[(15S)-hydroxy-(5Z,8Z,11Z,13E)-eicosatetraenoyl]-sn-glycero-3-phosphocholine + A + H2O. It carries out the reaction 2-(5Z,8Z,11Z,14Z)-eicosatetraenoyl-sn-glycero-3-phosphocholine + AH2 + O2 = 2-[(15R)-hydroxy-(5Z,8Z,11Z,13E)-eicosatetraenoyl]-sn-glycero-3-phosphocholine + A + H2O. The enzyme catalyses 2-(5Z,8Z,11Z,14Z)-eicosatetraenoyl-sn-glycero-3-phosphocholine + AH2 + O2 = 2-[(11R)-hydroxy-(5Z,8Z,12E,14Z)-eicosatetraenoyl]-sn-glycero-3-phosphocholine + A + H2O. The catalysed reaction is (9Z,12Z)-octadecadienoate + AH2 + O2 = 9-hydroxy-(10E,12Z)-octadecadienoate + A + H2O. It catalyses the reaction (9Z,12Z)-octadecadienoate + AH2 + O2 = 13-hydroxy-(9Z,11E)-octadecadienoate + A + H2O. It carries out the reaction (5Z,8Z,11Z,14Z)-eicosatetraenoate + AH2 + O2 = (15R)-hydroxy-(5Z,8Z,11Z,13E)-eicosatetraenoate + A + H2O. The enzyme catalyses (5Z,8Z,11Z,14Z)-eicosatetraenoate + AH2 + O2 = (11R)-hydroxy-(5Z,8Z,12E,14Z)-eicosatetraenoate + A + H2O. The catalysed reaction is (5Z,8Z,11Z,14Z,17Z)-eicosapentaenoate + AH2 + O2 = (11R)-hydroxy-(5Z,8Z,12E,14Z,17Z)-eicosapentaenoate + A + H2O. It catalyses the reaction (5Z,8Z,11Z,14Z,17Z)-eicosapentaenoate + AH2 + O2 = (18S)-hydroxy-(5Z,8Z,11Z,14Z,16E)-eicosapentaenoate + A + H2O. It carries out the reaction (5Z,8Z,11Z,14Z,17Z)-eicosapentaenoate + AH2 + O2 = (18R)-hydroxy-(5Z,8Z,11Z,14Z,16E)-eicosapentaenoate + A + H2O. The enzyme catalyses (5Z,8Z,11Z,14Z,17Z)-eicosapentaenoate + AH2 + O2 = (15R)-hydroxy-(5Z,8Z,11Z,13E,17Z)-eicosapentaenoate + A + H2O. The catalysed reaction is (5Z,8Z,11Z,14Z,17Z)-eicosapentaenoate + AH2 + O2 = (15S)-hydroxy-(5Z,8Z,11Z,13E,17Z)-eicosapentaenoate + A + H2O. It catalyses the reaction (7Z,10Z,13Z,16Z,19Z)-docosapentaenoate + AH2 + O2 = 13R-hydroxy-(7Z,10Z,14E,16Z,19Z)-docosapentaenoate + A + H2O. It carries out the reaction (4Z,7Z,10Z,13Z,16Z,19Z)-docosahexaenoate + AH2 + O2 = 13-hydroxy-(4Z,7Z,10Z,14E,16Z,19Z)-docosahexaenoate + A + H2O. The enzyme catalyses (5S)-hydroxy-(6E,8Z,11Z,14Z)-eicosatetraenoate + AH2 + O2 = (5S,15R)-dihydroxy-(6E,8Z,11Z,13E)-eicosatetraenoate + A + H2O. The catalysed reaction is (4Z,7Z,10Z,13Z,16Z,19Z)-docosahexaenoate + AH2 + O2 = 17R-hydroxy-(4Z,7Z,10Z,13Z,15E,19Z)-docosahexaenoate + A + H2O. It catalyses the reaction (5S)-hydroxy-(6E,8Z,11Z,14Z)-eicosatetraenoate + AH2 + O2 = (5S,15S)-dihydroxy-(6E,8Z,11Z,13E)-eicosatetraenoate + A + H2O. It carries out the reaction (5S)-hydroxy-(6E,8Z,11Z,14Z)-eicosatetraenoate + AH2 + O2 = (5S,11R)-dihydroxy-(6E,8Z,12E,14Z)-eicosatetraenoate + A + H2O. The enzyme catalyses 2-(5Z,8Z,11Z,14Z-eicosatetraenoyl)-glycerol + 2 O2 = 2-glyceryl-prostaglandin G2. The catalysed reaction is 2-glyceryl-prostaglandin G2 + AH2 = 2-glyceryl-prostaglandin H2 + A + H2O. It catalyses the reaction (5Z,8Z,11Z,14Z)-eicosatetraenoate + O2 = (15R)-hydroperoxy-(5Z,8Z,11Z,13E)-eicosatetraenoate. It carries out the reaction (5Z,8Z,11Z,14Z)-eicosatetraenoate + O2 = 11R-hydroperoxy-(5Z,8Z,12E,14Z)-eicosatetraenoate. The enzyme catalyses (9Z,12Z)-octadecadienoate + AH2 + O2 = (9R)-hydroxy-(10E,12Z)-octadecadienoate + A + H2O. The catalysed reaction is (9Z,12Z)-octadecadienoate + AH2 + O2 = (9S)-hydroxy-(10E,12Z)-octadecadienoate + A + H2O. It catalyses the reaction (9Z,12Z)-octadecadienoate + AH2 + O2 = (13S)-hydroxy-(9Z,11E)-octadecadienoate + A + H2O. It carries out the reaction (9Z,12Z)-octadecadienoate + AH2 + O2 = (13R)-hydroxy-(9Z,11E)-octadecadienoate + A + H2O. Its pathway is lipid metabolism; prostaglandin biosynthesis. Functionally, dual cyclooxygenase and peroxidase in the biosynthesis pathway of prostanoids, a class of C20 oxylipins mainly derived from arachidonate ((5Z,8Z,11Z,14Z)-eicosatetraenoate, AA, C20:4(n-6)), with a particular role in the inflammatory response. The cyclooxygenase activity oxygenates AA to the hydroperoxy endoperoxide prostaglandin G2 (PGG2), and the peroxidase activity reduces PGG2 to the hydroxy endoperoxide prostaglandin H2 (PGH2), the precursor of all 2-series prostaglandins and thromboxanes. This complex transformation is initiated by abstraction of hydrogen at carbon 13 (with S-stereochemistry), followed by insertion of molecular O2 to form the endoperoxide bridge between carbon 9 and 11 that defines prostaglandins. The insertion of a second molecule of O2 (bis-oxygenase activity) yields a hydroperoxy group in PGG2 that is then reduced to PGH2 by two electrons. Similarly catalyzes successive cyclooxygenation and peroxidation of dihomo-gamma-linoleate (DGLA, C20:3(n-6)) and eicosapentaenoate (EPA, C20:5(n-3)) to corresponding PGH1 and PGH3, the precursors of 1- and 3-series prostaglandins. In an alternative pathway of prostanoid biosynthesis, converts 2-arachidonoyl lysophopholipids to prostanoid lysophopholipids, which are then hydrolyzed by intracellular phospholipases to release free prostanoids. Metabolizes 2-arachidonoyl glycerol yielding the glyceryl ester of PGH2, a process that can contribute to pain response. Generates lipid mediators from n-3 and n-6 polyunsaturated fatty acids (PUFAs) via a lipoxygenase-type mechanism. Oxygenates PUFAs to hydroperoxy compounds and then reduces them to corresponding alcohols. Plays a role in the generation of resolution phase interaction products (resolvins) during both sterile and infectious inflammation. Metabolizes docosahexaenoate (DHA, C22:6(n-3)) to 17R-HDHA, a precursor of the D-series resolvins (RvDs). As a component of the biosynthetic pathway of E-series resolvins (RvEs), converts eicosapentaenoate (EPA, C20:5(n-3)) primarily to 18S-HEPE that is further metabolized by ALOX5 and LTA4H to generate 18S-RvE1 and 18S-RvE2. In vascular endothelial cells, converts docosapentaenoate (DPA, C22:5(n-3)) to 13R-HDPA, a precursor for 13-series resolvins (RvTs) shown to activate macrophage phagocytosis during bacterial infection. In activated leukocytes, contributes to oxygenation of hydroxyeicosatetraenoates (HETE) to diHETES (5,15-diHETE and 5,11-diHETE). Can also use linoleate (LA, (9Z,12Z)-octadecadienoate, C18:2(n-6)) as substrate and produce hydroxyoctadecadienoates (HODEs) in a regio- and stereospecific manner, being (9R)-HODE ((9R)-hydroxy-(10E,12Z)-octadecadienoate) and (13S)-HODE ((13S)-hydroxy-(9Z,11E)-octadecadienoate) its major products. During neuroinflammation, plays a role in neuronal secretion of specialized preresolving mediators (SPMs) 15R-lipoxin A4 that regulates phagocytic microglia. The chain is Prostaglandin G/H synthase 2 (PTGS2) from Equus caballus (Horse).